Reading from the N-terminus, the 942-residue chain is MRISIGRIAWQILAVLIAVAFTIEHDSICDESIGACGEPIHTVIRLAKRDDELARRIAADHDMHVKGDPFLDTHYFLYHSETTRTRRHKRAIVERLDSHPAVEWVEEQRPKKRVKRDYILLDNDVHHSNPFRRSVLNRDGTRRAQRQQPQSPREIPSLPFPDPLYKDQWYLHGGAVGGYDMNVRQAWLQGYAGRNVSVSILDDGIQRDHPDLAANYDPLASTDINDHDDDPTPQNNGDNKHGTRCAGEVAALAGNNQCGVGVAFKAKIGGVRMLDGAVSDSVEAASLSLNQDHIDIYSASWGPEDDGKTFDGPGPLAREAFYRGIKNGRGGKGNIFVWASGNGGSRQDSCSADGYTTSVYTLSISSATYDNHRPWYLEECPSSIATTYSSADFRQPAIVTVDVPGGCTDKHTGTSASAPLAAGIIALALEANPELTWRDMQHLVLRTANWKPLENNPGWSRNGVGRMVSNKFGYGLIDGGALVNMAKTWKTVPEQHICTYEYRLANPNPRPIVGRFQLNFTLDVNGCESGTPVLYLEHVQVHATVRYLKRGDLKLTLFSPSGTRSVLLPPRPQDFNANGFHKWPFLSVQQWGEDPRGTWLLMVESVTTNPAATGTFHDWTLLLYGTADPAQSGDPVYSATPATSQGVLSRVHQLTSQVEESAPISFPDLTSAGNCHDECNGGCTESSSATSCFACKHLTQTLRNKGGSGFKCVQKCDDTYYLDGDKCKMCSSHCHTCTKAEVCETCPGSLLLIDVDNMPHYDHGKCVESCPPGLVADYESNLVQAKCIWRKDLCGDGYYINAVGKCDLCDSSCETCTAPGPMSCEKCSKGYGKGSIGYCRPCCPEGSTKSWQCEDCSKPDPTLLIDSNKSSGFGLMFWIVVSLIAACGICACKKCASETKSSNVEYAPLAQYNATNGAINLGAHTDDEDDDEDEVFVNPQIV.

The signal sequence occupies residues methionine 1–threonine 22. Residues isoleucine 23 to arginine 116 constitute a propeptide that is removed on maturation. Over aspartate 117–serine 871 the chain is Lumenal. Residue aspartate 124 coordinates Ca(2+). Residues proline 130–phenylalanine 160 are disordered. The Peptidase S8 domain maps to glutamine 168–valine 483. Residue asparagine 195 is glycosylated (N-linked (GlcNAc...) asparagine). Aspartate 202 (charge relay system) is an active-site residue. Aspartate 203 provides a ligand contact to substrate. Residues aspartate 211, aspartate 223, aspartate 228, and aspartate 230 each coordinate Ca(2+). Residues aspartate 211–glycine 242 are disordered. Aspartate 238 to asparagine 239 provides a ligand contact to substrate. Histidine 241 serves as the catalytic Charge relay system. Ca(2+) contacts are provided by leucine 252, asparagine 255, glutamine 257, and glycine 259. 2 disulfides stabilise this stretch: cysteine 258–cysteine 407 and cysteine 350–cysteine 380. Substrate-binding positions include glutamate 283, serine 300–aspartate 305, aspartate 311, and alanine 339–asparagine 342. Aspartate 305 lines the Ca(2+) pocket. Residue aspartate 348 participates in Ca(2+) binding. Substrate-binding residues include aspartate 353 and tyrosine 355. Residue glutamate 378 participates in Ca(2+) binding. The active-site Charge relay system is serine 415. Serine 415 provides a ligand contact to substrate. A P/Homo B domain is found at threonine 491–proline 629. Cysteine 498 and cysteine 527 form a disulfide bridge. An N-linked (GlcNAc...) asparagine glycan is attached at asparagine 519. FU repeat units follow at residues asparagine 674–aspartate 723, aspartate 725–aspartate 777, and glycine 804–serine 850. A glycan (N-linked (GlcNAc...) asparagine) is linked at asparagine 868. Residues glycine 872–cysteine 892 traverse the membrane as a helical segment. At lysine 893–valine 942 the chain is on the cytoplasmic side. Residues glycine 922 to valine 942 are disordered. Positions aspartate 926–valine 935 are enriched in acidic residues.

This sequence belongs to the peptidase S8 family. Furin subfamily. It depends on Ca(2+) as a cofactor. In terms of tissue distribution, in larvae and adults, expressed in all hypodermal cells, vulva and ventral nerve cords. As to expression, most highly expressed isoform in the embryonic epidermis. Expressed primarily in the germline. In terms of tissue distribution, expressed primarily in pharyngeal epithelial cells.

It localises to the membrane. Serine endoprotease which cleaves proproteins at paired basic amino acids at the consensus RX(K/R)R motif. Involved in N-terminal processing of cuticle collagens and plays a role in cuticle biosynthesis. May cleave both sqt-3 and dpy-17 collagens to promote their secretion. Acts in ASEL sensory neurons to regulate high salt chemotaxis responses probably by cleaving insulin-like protein ins-6 into its mature and active form. Essential for embryonic and larval development. In terms of biological role, involved in cuticle biosynthesis but dispensable for larval development. This Caenorhabditis elegans protein is Endoprotease bli-4 (bli-4).